Consider the following 223-residue polypeptide: 7-carboxy-7-deazaguanine synthase (223 aa).

Substrate is bound by residues 12-14 (LQG) and R27. The Radical SAM core domain occupies 18 to 223 (FTGVPAIFIR…MQTHKYLNIA (206 aa)). The [4Fe-4S] cluster site is built by C31, C35, and C38. Residue T40 coordinates Mg(2+). Substrate is bound at residue T92. S-adenosyl-L-methionine-binding positions include G94 and 136-138 (SPK).

This sequence belongs to the radical SAM superfamily. 7-carboxy-7-deazaguanine synthase family. Homodimer. It depends on [4Fe-4S] cluster as a cofactor. S-adenosyl-L-methionine is required as a cofactor. Mg(2+) serves as cofactor.

The catalysed reaction is 6-carboxy-5,6,7,8-tetrahydropterin + H(+) = 7-carboxy-7-deazaguanine + NH4(+). It functions in the pathway purine metabolism; 7-cyano-7-deazaguanine biosynthesis. In terms of biological role, catalyzes the complex heterocyclic radical-mediated conversion of 6-carboxy-5,6,7,8-tetrahydropterin (CPH4) to 7-carboxy-7-deazaguanine (CDG), a step common to the biosynthetic pathways of all 7-deazapurine-containing compounds. The chain is 7-carboxy-7-deazaguanine synthase from Escherichia coli (strain K12).